We begin with the raw amino-acid sequence, 367 residues long: MSSRRSVGDPEYLTRRIPQNPRYQHIKTRLDTGSSLTKYIEKLEEIKRNYRYRKDELFKRLKVTTFAQLVVQVASLSDETLEVTNEEIHKLEGGNSPASDADAELTAGTNGKGSPNGTPPSPVLFINNAGAGESYRSTLQSLISGVGELDIEKDTHKKADTQAKDTPYPDCPFLLLDVRDRDAYDQCHIVGAYSYPIAMLSRAMNPYTNSILEYKNAHGKIIILYDDDERLASQAATTMCERGFENLFMLSGGLKVLAQKVPEGLITGSLPISCQVAAPTGSARKKPVPKVPPTRAESKWRYSAEDLQKIKYYLEEEQLPSDTASRLSRGSSGRDSKATTARSSPSLPSTAGSRMLSRSSIQNRPWK.

A disordered region spans residues 89-121; sequence HKLEGGNSPASDADAELTAGTNGKGSPNGTPPS. The span at 107-116 shows a compositional bias: polar residues; the sequence is AGTNGKGSPN. The Rhodanese domain occupies 169–266; the sequence is PDCPFLLLDV…LAQKVPEGLI (98 aa). The disordered stretch occupies residues 319–367; it reads LPSDTASRLSRGSSGRDSKATTARSSPSLPSTAGSRMLSRSSIQNRPWK. The span at 338-367 shows a compositional bias: polar residues; that stretch reads ATTARSSPSLPSTAGSRMLSRSSIQNRPWK.

This sequence belongs to the CEP41 family.

The protein localises to the cytoplasm. The protein resides in the cytoskeleton. Its subcellular location is the microtubule organizing center. It is found in the centrosome. It localises to the cell projection. The protein localises to the cilium. The protein resides in the cilium basal body. Functionally, required during ciliogenesis for tubulin glutamylation in cilium. Probably acts by participating in the transport of tubulin polyglutamylases between the basal body and the cilium. The sequence is that of Centrosomal protein of 41 kDa (CEP41) from Gallus gallus (Chicken).